The following is a 548-amino-acid chain: Chaperonin GroEL (548 aa).

ATP contacts are provided by residues 29–32, K50, 86–90, G414, and D493; these read THGP and DGTTT.

It belongs to the chaperonin (HSP60) family. As to quaternary structure, forms a cylinder of 14 subunits composed of two heptameric rings stacked back-to-back. Interacts with the co-chaperonin GroES.

It is found in the cytoplasm. The enzyme catalyses ATP + H2O + a folded polypeptide = ADP + phosphate + an unfolded polypeptide.. Functionally, together with its co-chaperonin GroES, plays an essential role in assisting protein folding. The GroEL-GroES system forms a nano-cage that allows encapsulation of the non-native substrate proteins and provides a physical environment optimized to promote and accelerate protein folding. The chain is Chaperonin GroEL from Desulfatibacillum aliphaticivorans.